Reading from the N-terminus, the 1044-residue chain is Pre-mRNA-splicing factor ATP-dependent RNA helicase DHX16 (1044 aa).

Disordered regions lie at residues 101-210 (EDSE…AYEE) and 374-394 (LQGNEEPSAPPTSTQAQQKES). Ser103, Ser106, and Ser107 each carry phosphoserine. Basic residues predominate over residues 119–130 (QKKRKKRKHLRK). The segment covering 134–143 (EEEEEEEEEA) has biased composition (acidic residues). Ser163 is modified (phosphoserine). The segment covering 169–210 (RTERERLQDLEERDAFAERVRQRDKDRTRNVLERSDKKAYEE) has biased composition (basic and acidic residues). One can recognise a Helicase ATP-binding domain in the interval 412-576 (LAAIANHQVL…FDDAPVFRIP (165 aa)). Residue 425 to 432 (GETGSGKT) coordinates ATP. Positions 523-526 (DEAH) match the DEAH box motif. Residues 601-774 (SVLQIHVTQP…NVVLLLKSLG (174 aa)) form the Helicase C-terminal domain. Thr715 is modified (phosphothreonine).

Belongs to the DEAD box helicase family. DEAH subfamily. DDX16/PRP8 sub-subfamily. As to quaternary structure, component of pre-catalytic spliceosome complexes. Component of the minor spliceosome, which splices U12-type introns. Interacts with GPKOW. Interacts with TRIM6. Interacts with RIGI.

Its subcellular location is the nucleus. It localises to the nucleoplasm. The protein resides in the cytoplasm. It catalyses the reaction ATP + H2O = ADP + phosphate + H(+). In terms of biological role, required for pre-mRNA splicing as a component of the spliceosome. Contributes to pre-mRNA splicing after spliceosome formation and prior to the first transesterification reaction. As a component of the minor spliceosome, involved in the splicing of U12-type introns in pre-mRNAs. Also plays a role in innate antiviral response by acting as a pattern recognition receptor sensing splicing signals in viral RNA. Mechanistically, TRIM6 promotes the interaction between unanchored 'Lys-48'-polyubiquitin chains and DHX16, leading to DHX16 interaction with RIGI and ssRNA to amplify RIGI-dependent innate antiviral immune responses. This chain is Pre-mRNA-splicing factor ATP-dependent RNA helicase DHX16 (DHX16), found in Pan troglodytes (Chimpanzee).